The following is a 588-amino-acid chain: Adenine deaminase (588 aa).

The protein belongs to the metallo-dependent hydrolases superfamily. Adenine deaminase family. In terms of assembly, homodimer. The cofactor is Mn(2+).

It carries out the reaction adenine + H2O + H(+) = hypoxanthine + NH4(+). This is Adenine deaminase from Escherichia fergusonii (strain ATCC 35469 / DSM 13698 / CCUG 18766 / IAM 14443 / JCM 21226 / LMG 7866 / NBRC 102419 / NCTC 12128 / CDC 0568-73).